We begin with the raw amino-acid sequence, 217 residues long: MNQTLLSDFGTPVERVERAIDALRNGRGVMVLDDESRENEGDMVFAAEAMTVEQMALTIRHGSGIVCLCITDERRQQLDLPMMVANNSSQFQTAFTVTIEAAKGVTTGVSAADRLTTIRAAIADNAKPTDLNRPGHVFPLRGQPGGVLSRRGHTEASIDLATLAGYKPAGVLCELTNDDGSMAHAPEVIEFAKLHDMPVVTIDDLAEYRQSQEKKAS.

Residues 37–38 (RE), D42, 150–154 (RRGHT), and E174 each bind D-ribulose 5-phosphate. E38 serves as a coordination point for Mg(2+). H153 is a binding site for Mg(2+).

The protein belongs to the DHBP synthase family. As to quaternary structure, homodimer. Requires Mg(2+) as cofactor. Mn(2+) is required as a cofactor.

The enzyme catalyses D-ribulose 5-phosphate = (2S)-2-hydroxy-3-oxobutyl phosphate + formate + H(+). Its pathway is cofactor biosynthesis; riboflavin biosynthesis; 2-hydroxy-3-oxobutyl phosphate from D-ribulose 5-phosphate: step 1/1. Catalyzes the conversion of D-ribulose 5-phosphate to formate and 3,4-dihydroxy-2-butanone 4-phosphate. The chain is 3,4-dihydroxy-2-butanone 4-phosphate synthase from Yersinia enterocolitica serotype O:8 / biotype 1B (strain NCTC 13174 / 8081).